The chain runs to 943 residues: Leucine--tRNA ligase (943 aa).

The 'HIGH' region signature appears at 40–51 (PYPSGAGLHVGH). The short motif at 717–721 (KMSKS) is the 'KMSKS' region element. Lys720 contacts ATP.

Belongs to the class-I aminoacyl-tRNA synthetase family.

The protein localises to the cytoplasm. The enzyme catalyses tRNA(Leu) + L-leucine + ATP = L-leucyl-tRNA(Leu) + AMP + diphosphate. The protein is Leucine--tRNA ligase of Bacteroides fragilis (strain ATCC 25285 / DSM 2151 / CCUG 4856 / JCM 11019 / LMG 10263 / NCTC 9343 / Onslow / VPI 2553 / EN-2).